We begin with the raw amino-acid sequence, 398 residues long: Palmitoyl-[acyl-carrier-protein] 4-desaturase 3, chloroplastic (398 aa).

The transit peptide at 1 to 29 directs the protein to the chloroplast; that stretch reads MALRSLFLPNAFPNASSFRGGSRRGAAPR. Positions 139, 177, 180, 230, 263, and 266 each coordinate Fe cation.

This sequence belongs to the fatty acid desaturase type 2 family. In terms of assembly, homodimer. Requires Fe(2+) as cofactor. Preferentially expressed in the flower labellum. Low expression in leaves.

The protein resides in the plastid. The protein localises to the chloroplast stroma. The enzyme catalyses hexadecanoyl-[ACP] + 2 reduced [2Fe-2S]-[ferredoxin] + O2 + 2 H(+) = (4Z)-hexadecenoyl-[ACP] + 2 oxidized [2Fe-2S]-[ferredoxin] + 2 H2O. It functions in the pathway lipid metabolism; fatty acid metabolism. In terms of biological role, converts palmitoyl-ACP to (4Z)-hexadec-4-enoyl-ACP by introduction of a cis double bond between carbons 4 and 5 of the acyl chain. The chain is Palmitoyl-[acyl-carrier-protein] 4-desaturase 3, chloroplastic (SAD3) from Ophrys arachnitiformis subsp. archipelagi (Orchid).